Reading from the N-terminus, the 213-residue chain is Octanoyltransferase (213 aa).

In terms of domain architecture, BPL/LPL catalytic spans 36-211 (TNTPDEIWLV…KFCQQLGFKL (176 aa)). Substrate contacts are provided by residues 75-82 (RGGQVTYH), 142-144 (SLG), and 155-157 (GLA). Cys-173 functions as the Acyl-thioester intermediate in the catalytic mechanism.

The protein belongs to the LipB family.

It localises to the cytoplasm. It carries out the reaction octanoyl-[ACP] + L-lysyl-[protein] = N(6)-octanoyl-L-lysyl-[protein] + holo-[ACP] + H(+). It functions in the pathway protein modification; protein lipoylation via endogenous pathway; protein N(6)-(lipoyl)lysine from octanoyl-[acyl-carrier-protein]: step 1/2. Catalyzes the transfer of endogenously produced octanoic acid from octanoyl-acyl-carrier-protein onto the lipoyl domains of lipoate-dependent enzymes. Lipoyl-ACP can also act as a substrate although octanoyl-ACP is likely to be the physiological substrate. The protein is Octanoyltransferase of Photorhabdus laumondii subsp. laumondii (strain DSM 15139 / CIP 105565 / TT01) (Photorhabdus luminescens subsp. laumondii).